The primary structure comprises 647 residues: Threonine--tRNA ligase (647 aa).

The region spanning 1 to 61 is the TGS domain; it reads MIKITFPDGA…EEDGSIEIVT (61 aa). The catalytic stretch occupies residues 240–538; sequence DHRKLGKELD…LIETYKGAFP (299 aa). Positions 334, 385, and 515 each coordinate Zn(2+).

This sequence belongs to the class-II aminoacyl-tRNA synthetase family. In terms of assembly, homodimer. It depends on Zn(2+) as a cofactor.

It localises to the cytoplasm. The catalysed reaction is tRNA(Thr) + L-threonine + ATP = L-threonyl-tRNA(Thr) + AMP + diphosphate + H(+). In terms of biological role, catalyzes the attachment of threonine to tRNA(Thr) in a two-step reaction: L-threonine is first activated by ATP to form Thr-AMP and then transferred to the acceptor end of tRNA(Thr). Also edits incorrectly charged L-seryl-tRNA(Thr). The polypeptide is Threonine--tRNA ligase (Streptococcus pyogenes serotype M6 (strain ATCC BAA-946 / MGAS10394)).